A 129-amino-acid chain; its full sequence is MDPESRRLFNVRKVQKGKKPQFKRTCSHKFKRLDDNWRRPRGSQGKQRRKYVSKGALVQVGYGSPAAVKGLHPSGYSDVLISSIAELELVDPSYEAIRIAGTIGAQKKALILAKAEEAGIKVLNSGRSE.

The protein belongs to the eukaryotic ribosomal protein eL32 family.

This Methanosarcina acetivorans (strain ATCC 35395 / DSM 2834 / JCM 12185 / C2A) protein is Large ribosomal subunit protein eL32 (rpl32e).